The following is a 187-amino-acid chain: Pyridoxal 5'-phosphate synthase subunit PdxT (187 aa).

47–49 (GES) provides a ligand contact to L-glutamine. The Nucleophile role is filled by C76. L-glutamine contacts are provided by residues R102 and 128–129 (IR). Active-site charge relay system residues include H165 and E167.

It belongs to the glutaminase PdxT/SNO family. In the presence of PdxS, forms a dodecamer of heterodimers. Only shows activity in the heterodimer.

The enzyme catalyses aldehydo-D-ribose 5-phosphate + D-glyceraldehyde 3-phosphate + L-glutamine = pyridoxal 5'-phosphate + L-glutamate + phosphate + 3 H2O + H(+). The catalysed reaction is L-glutamine + H2O = L-glutamate + NH4(+). Its pathway is cofactor biosynthesis; pyridoxal 5'-phosphate biosynthesis. Functionally, catalyzes the hydrolysis of glutamine to glutamate and ammonia as part of the biosynthesis of pyridoxal 5'-phosphate. The resulting ammonia molecule is channeled to the active site of PdxS. This is Pyridoxal 5'-phosphate synthase subunit PdxT from Methanococcus maripaludis (strain DSM 14266 / JCM 13030 / NBRC 101832 / S2 / LL).